The following is a 61-amino-acid chain: Protein stunted (61 aa).

Residues 3 to 15 (AWRAAGITYIQYS) are sufficient for mth activation.

It belongs to the eukaryotic ATPase epsilon family.

Activates the G-protein coupled receptor mth in vitro, leading to increased intracellular calcium ion levels. The protein is Protein stunted of Drosophila melanogaster (Fruit fly).